The chain runs to 949 residues: Bifunctional uridylyltransferase/uridylyl-removing enzyme (949 aa).

Positions 1-377 (MARHETSFPE…RFRNRVRKIP (377 aa)) are uridylyltransferase. A uridylyl-removing region spans residues 378–733 (GTLDFVDDGG…VRTHDFHAIT (356 aa)). The HD domain occupies 494–610 (VDEHLLRAVD…VDFAERVQSL (117 aa)). ACT domains are found at residues 734–815 (EITV…DVIA) and 845–926 (VIEV…ERMP). The tract at residues 925 to 949 (MPSGIIAPTPVPRASHGSKATKAET) is disordered.

Belongs to the GlnD family. It depends on Mg(2+) as a cofactor.

The catalysed reaction is [protein-PII]-L-tyrosine + UTP = [protein-PII]-uridylyl-L-tyrosine + diphosphate. The enzyme catalyses [protein-PII]-uridylyl-L-tyrosine + H2O = [protein-PII]-L-tyrosine + UMP + H(+). Its activity is regulated as follows. Uridylyltransferase (UTase) activity is inhibited by glutamine, while glutamine activates uridylyl-removing (UR) activity. Modifies, by uridylylation and deuridylylation, the PII regulatory proteins (GlnB and homologs), in response to the nitrogen status of the cell that GlnD senses through the glutamine level. Under low glutamine levels, catalyzes the conversion of the PII proteins and UTP to PII-UMP and PPi, while under higher glutamine levels, GlnD hydrolyzes PII-UMP to PII and UMP (deuridylylation). Thus, controls uridylylation state and activity of the PII proteins, and plays an important role in the regulation of nitrogen fixation and metabolism. The protein is Bifunctional uridylyltransferase/uridylyl-removing enzyme of Sinorhizobium medicae (strain WSM419) (Ensifer medicae).